The primary structure comprises 156 residues: Ribosomal RNA large subunit methyltransferase H (156 aa).

Residues Leu73, Gly104, and 123 to 128 contribute to the S-adenosyl-L-methionine site; that span reads LSALTL.

This sequence belongs to the RNA methyltransferase RlmH family. In terms of assembly, homodimer.

It localises to the cytoplasm. It carries out the reaction pseudouridine(1915) in 23S rRNA + S-adenosyl-L-methionine = N(3)-methylpseudouridine(1915) in 23S rRNA + S-adenosyl-L-homocysteine + H(+). In terms of biological role, specifically methylates the pseudouridine at position 1915 (m3Psi1915) in 23S rRNA. The sequence is that of Ribosomal RNA large subunit methyltransferase H from Shewanella baltica (strain OS223).